The following is a 196-amino-acid chain: Probable GTP-binding protein EngB (196 aa).

The EngB-type G domain occupies 22 to 194 (DKKEIAFAGR…LKTIGEILGD (173 aa)). Residues 30 to 37 (GRSNVGKS), 56 to 60 (GKTRS), 74 to 77 (DLPG), 141 to 144 (TKSD), and 173 to 175 (FSS) each bind GTP. Mg(2+) is bound by residues Ser37 and Thr58.

It belongs to the TRAFAC class TrmE-Era-EngA-EngB-Septin-like GTPase superfamily. EngB GTPase family. Mg(2+) is required as a cofactor.

Its function is as follows. Necessary for normal cell division and for the maintenance of normal septation. This chain is Probable GTP-binding protein EngB, found in Petrotoga mobilis (strain DSM 10674 / SJ95).